The chain runs to 311 residues: D-allose-binding periplasmic protein (311 aa).

An N-terminal signal peptide occupies residues 1 to 23 (MNKYLKYFSGTLVGLMLSTSAFA).

Belongs to the bacterial solute-binding protein 2 family.

The protein localises to the periplasm. Part of the binding-protein-dependent transport system AlsBAC for D-allose. The sequence is that of D-allose-binding periplasmic protein (alsB) from Escherichia coli (strain K12).